The sequence spans 381 residues: Arf-GAP with dual PH domain-containing protein 2 (381 aa).

Residues 9–132 (KRLLELLQAA…TAIDKAVSHP (124 aa)) form the Arf-GAP domain. The C4-type zinc-finger motif lies at 25–48 (CADCGAADPDWASYKLGIFICLHC). PH domains are found at residues 132–233 (PGNR…AARL) and 255–361 (NYLK…GVLS).

Its subcellular location is the cytoplasm. It localises to the cell membrane. GTPase-activating protein for the ADP ribosylation factor family (Potential). Binds phosphatidylinositol 3,4,5-trisphosphate (PtdInsP3) and inositol 1,3,4,5-tetrakisphosphate (InsP4). Possesses a stoichiometry of two binding sites for InsP4 with identical affinity. The sequence is that of Arf-GAP with dual PH domain-containing protein 2 (Adap2) from Mus musculus (Mouse).